A 516-amino-acid polypeptide reads, in one-letter code: Immunoglobulin G-binding protein A (516 aa).

Residues 1 to 36 form the signal peptide; the sequence is MKKKNIYSIRKLGVGIASVTLGTLLISGGVTPAANA. The short motif at 7-18 is the YSIRK-G/S signaling motif element; sequence YSIRKLGVGIAS. The Immunoglobulin-binding region E repeat unit spans residues 37–92; it reads AQHDEAQQNAFYQVLNMPNLNADQRNGFIQSLKDDPSQSANVLGEAQKLNDSQAPK. The stretch at 93–153 is one Immunoglobulin-binding region D repeat; the sequence is ADAQQNNFNK…KKLNESQAPK (61 aa). The stretch at 154–211 is one Immunoglobulin-binding region A repeat; that stretch reads ADNNFNKEQQNAFYEILNMPNLNEEQRNGFIQSLKDDPSQSANLLSEAKKLNESQAPK. The stretch at 212–269 is one Immunoglobulin-binding region B repeat; it reads ADNKFNKEQQNAFYEILHLPNLNEEQRNGFIQSLKDDPSQSANLLAEAKKLNDAQAPK. Residues 270-327 form an Immunoglobulin-binding region C repeat; the sequence is ADNKFNKEQQNAFYEILHLPNLTEEQRNGFIQSLKDDPSVSKEILAEAKKLNDAQAPK. The segment covering 318-420 has biased composition (basic and acidic residues); it reads KKLNDAQAPK…GNKPGKEDGN (103 aa). Disordered regions lie at residues 318–440 and 467–487; these read KKLN…ANGT and KKQP…ETGE. Tandem repeats lie at residues 333 to 340, 341 to 348, 349 to 356, 357 to 364, 365 to 372, 373 to 380, 381 to 388, 389 to 396, 397 to 404, 405 to 412, and 413 to 420. The interval 333-420 is 11 X 8 AA approximate tandem repeats; that stretch reads KPGKEDNNKP…GNKPGKEDGN (88 aa). One can recognise a LysM domain in the interval 421–465; sequence GVHVVKPGDTVNDIAKANGTTADKIAADNKLADKNMIKPGQELVV. The short motif at 482-486 is the LPXTG sorting signal element; the sequence is LPETG. At threonine 485 the chain carries Pentaglycyl murein peptidoglycan amidated threonine. Positions 486-516 are cleaved as a propeptide — removed by sortase A; sequence GEENPFIGTTVFGGLSLALGAALLAGRRREL.

Belongs to the immunoglobulin-binding protein SpA family. In terms of assembly, interacts with host TNFRSF1A; this interaction leads to the stimulation of both surface expression and shedding of TNFRSF1A.

The protein localises to the secreted. It is found in the cell wall. Its function is as follows. Plays a role in the inhibition of the host innate and adaptive immune responses. Possesses five immunoglobulin-binding domains that capture both the fragment crystallizable region (Fc region) and the Fab region (part of Ig that identifies antigen) of immunoglobulins. In turn, Staphylococcus aureus is protected from phagocytic killing via inhibition of Ig Fc region. In addition, the host elicited B-cell response is prevented due to a decrease of antibody-secreting cell proliferation that enter the bone marrow, thereby decreasing long-term antibody production. Inhibits osteogenesis by preventing osteoblast proliferation and expression of alkaline phosphatase, type I collagen, osteopontin and osteocalcin. Acts directly as a pro-inflammatory factor in the lung through its ability to bind and activate tumor necrosis factor alpha receptor 1/TNFRSF1A. The polypeptide is Immunoglobulin G-binding protein A (spa) (Staphylococcus aureus (strain NCTC 8325 / PS 47)).